A 362-amino-acid chain; its full sequence is Heat-inducible transcription repressor HrcA (362 aa).

This sequence belongs to the HrcA family.

Its function is as follows. Negative regulator of class I heat shock genes (grpE-dnaK-dnaJ and groELS operons). Prevents heat-shock induction of these operons. The chain is Heat-inducible transcription repressor HrcA from Bradyrhizobium sp. (strain BTAi1 / ATCC BAA-1182).